A 279-amino-acid polypeptide reads, in one-letter code: Digeranylgeranylglyceryl phosphate synthase (279 aa).

Transmembrane regions (helical) follow at residues 14–34 (VKNC…ASNF), 36–56 (FGLI…CGFG), 94–114 (LMIS…IALI), 131–153 (IIGN…ASVG), 157–175 (ITLI…REII), 201–221 (IFVA…PYIL), 224–244 (FGAP…LAVL), and 259–279 (SKYI…GSLM).

It belongs to the UbiA prenyltransferase family. DGGGP synthase subfamily. Mg(2+) is required as a cofactor.

It is found in the cell membrane. It carries out the reaction sn-3-O-(geranylgeranyl)glycerol 1-phosphate + (2E,6E,10E)-geranylgeranyl diphosphate = 2,3-bis-O-(geranylgeranyl)-sn-glycerol 1-phosphate + diphosphate. It participates in membrane lipid metabolism; glycerophospholipid metabolism. Its function is as follows. Prenyltransferase that catalyzes the transfer of the geranylgeranyl moiety of geranylgeranyl diphosphate (GGPP) to the C2 hydroxyl of (S)-3-O-geranylgeranylglyceryl phosphate (GGGP). This reaction is the second ether-bond-formation step in the biosynthesis of archaeal membrane lipids. The polypeptide is Digeranylgeranylglyceryl phosphate synthase (Methanococcus aeolicus (strain ATCC BAA-1280 / DSM 17508 / OCM 812 / Nankai-3)).